Consider the following 149-residue polypeptide: MTDLSAQKRLAADVLDVGKNRVWFNPERQGDIADAITREDVRELVDEGAIQAKDKKGNSRGRARERQKKRAYGHQKGAGSRKGKAGARQNSKEDWESRIRAQRTKLRELRDEGTLSSSQYRDLYDKAGGGEFDSVADLERYIDANHGDA.

Positions 45-130 (VDEGAIQAKD…RDLYDKAGGG (86 aa)) are disordered. Residues 58–85 (NSRGRARERQKKRAYGHQKGAGSRKGKA) are compositionally biased toward basic residues. A compositionally biased stretch (basic and acidic residues) spans 90–113 (NSKEDWESRIRAQRTKLRELRDEG).

Belongs to the eukaryotic ribosomal protein eL19 family. In terms of assembly, part of the 50S ribosomal subunit.

In terms of biological role, binds to the 23S rRNA. Located at the polypeptide exit tunnel on the outside of the subunit. The polypeptide is Large ribosomal subunit protein eL19 (Haloarcula marismortui (strain ATCC 43049 / DSM 3752 / JCM 8966 / VKM B-1809) (Halobacterium marismortui)).